The following is a 353-amino-acid chain: Ribosomal RNA large subunit methyltransferase M (353 aa).

S-adenosyl-L-methionine-binding positions include serine 183, 216-219, aspartate 235, aspartate 255, and aspartate 271; that span reads APGG. Catalysis depends on lysine 300, which acts as the Proton acceptor.

The protein belongs to the class I-like SAM-binding methyltransferase superfamily. RNA methyltransferase RlmE family. RlmM subfamily. Monomer.

It localises to the cytoplasm. It carries out the reaction cytidine(2498) in 23S rRNA + S-adenosyl-L-methionine = 2'-O-methylcytidine(2498) in 23S rRNA + S-adenosyl-L-homocysteine + H(+). Its function is as follows. Catalyzes the 2'-O-methylation at nucleotide C2498 in 23S rRNA. The chain is Ribosomal RNA large subunit methyltransferase M from Azotobacter vinelandii (strain DJ / ATCC BAA-1303).